We begin with the raw amino-acid sequence, 709 residues long: DNA topoisomerase 1 (709 aa).

Residues K3–I127 form the Toprim domain. Mg(2+) contacts are provided by E9 and D95. A Topo IA-type catalytic domain is found at D143 to K598. An interaction with DNA region spans residues S176 to Q181. Y334 functions as the O-(5'-phospho-DNA)-tyrosine intermediate in the catalytic mechanism. 2 consecutive C4-type zinc fingers follow at residues C618–C646 and C667–C696.

It belongs to the type IA topoisomerase family. Monomer. It depends on Mg(2+) as a cofactor.

The enzyme catalyses ATP-independent breakage of single-stranded DNA, followed by passage and rejoining.. Functionally, releases the supercoiling and torsional tension of DNA, which is introduced during the DNA replication and transcription, by transiently cleaving and rejoining one strand of the DNA duplex. Introduces a single-strand break via transesterification at a target site in duplex DNA. The scissile phosphodiester is attacked by the catalytic tyrosine of the enzyme, resulting in the formation of a DNA-(5'-phosphotyrosyl)-enzyme intermediate and the expulsion of a 3'-OH DNA strand. The free DNA strand then undergoes passage around the unbroken strand, thus removing DNA supercoils. Finally, in the religation step, the DNA 3'-OH attacks the covalent intermediate to expel the active-site tyrosine and restore the DNA phosphodiester backbone. This is DNA topoisomerase 1 from Mycoplasma genitalium (strain ATCC 33530 / DSM 19775 / NCTC 10195 / G37) (Mycoplasmoides genitalium).